The primary structure comprises 61 residues: Large ribosomal subunit protein bL32 (61 aa).

Belongs to the bacterial ribosomal protein bL32 family.

The protein is Large ribosomal subunit protein bL32 of Acidithiobacillus ferrooxidans (strain ATCC 23270 / DSM 14882 / CIP 104768 / NCIMB 8455) (Ferrobacillus ferrooxidans (strain ATCC 23270)).